A 95-amino-acid chain; its full sequence is MTVDAATVRRIAHLARIAVDDAEVPHLQGELNAILAFVEQLQEVNVDGVEPMTSVMPMEMKKRADVVNDGGIADKIVGNAPVTDDHFFLVPKVVE.

Belongs to the GatC family. Heterotrimer of A, B and C subunits.

The enzyme catalyses L-glutamyl-tRNA(Gln) + L-glutamine + ATP + H2O = L-glutaminyl-tRNA(Gln) + L-glutamate + ADP + phosphate + H(+). It carries out the reaction L-aspartyl-tRNA(Asn) + L-glutamine + ATP + H2O = L-asparaginyl-tRNA(Asn) + L-glutamate + ADP + phosphate + 2 H(+). In terms of biological role, allows the formation of correctly charged Asn-tRNA(Asn) or Gln-tRNA(Gln) through the transamidation of misacylated Asp-tRNA(Asn) or Glu-tRNA(Gln) in organisms which lack either or both of asparaginyl-tRNA or glutaminyl-tRNA synthetases. The reaction takes place in the presence of glutamine and ATP through an activated phospho-Asp-tRNA(Asn) or phospho-Glu-tRNA(Gln). The protein is Aspartyl/glutamyl-tRNA(Asn/Gln) amidotransferase subunit C of Nitrobacter hamburgensis (strain DSM 10229 / NCIMB 13809 / X14).